The chain runs to 424 residues: Trigger factor (424 aa).

Positions 163–248 (GDTVVLDFEG…IHEIKAKELP (86 aa)) constitute a PPIase FKBP-type domain.

The protein belongs to the FKBP-type PPIase family. Tig subfamily.

Its subcellular location is the cytoplasm. It catalyses the reaction [protein]-peptidylproline (omega=180) = [protein]-peptidylproline (omega=0). In terms of biological role, involved in protein export. Acts as a chaperone by maintaining the newly synthesized protein in an open conformation. Functions as a peptidyl-prolyl cis-trans isomerase. This Bacillus licheniformis (strain ATCC 14580 / DSM 13 / JCM 2505 / CCUG 7422 / NBRC 12200 / NCIMB 9375 / NCTC 10341 / NRRL NRS-1264 / Gibson 46) protein is Trigger factor.